Here is a 256-residue protein sequence, read N- to C-terminus: Sorbitol dehydrogenase (256 aa).

Residues 15-17 (RGI), D36, 59-60 (DV), N86, Y152, K156, and 182-187 (PGVVDG) contribute to the NAD(+) site. The active-site Proton acceptor is Y152.

Belongs to the short-chain dehydrogenases/reductases (SDR) family. In terms of assembly, homodimer. May function as a tetramer in vivo.

The catalysed reaction is keto-D-fructose + NADH + H(+) = D-sorbitol + NAD(+). The enzyme catalyses galactitol + NAD(+) = keto-D-tagatose + NADH + H(+). It catalyses the reaction L-iditol + NAD(+) = keto-L-sorbose + NADH + H(+). Inhibited by DTT, N-bromosuccinimide and iodoacetic acid. In terms of biological role, catalyzes the oxidation of D-sorbitol (D-glucitol) to D-fructose. Can also catalyze the oxidation of galactitol to D-tagatose and the oxidation of L-iditol, with lower efficiency. The protein is Sorbitol dehydrogenase (polS) of Cereibacter sphaeroides (Rhodobacter sphaeroides).